The sequence spans 460 residues: Rab-3A-interacting protein (460 aa).

Phosphoserine is present on residues Ser147, Ser149, Ser247, Ser250, Ser272, and Ser280. A coiled-coil region spans residues 149-244; the sequence is SVLEVREKGY…EVAALKTLVL (96 aa). Positions 246 to 280 are disordered; the sequence is SSPTSPTQEPLAAGKTPFKRGHTRNKSTSSAMSGS. The segment covering 271–280 has biased composition (polar residues); that stretch reads KSTSSAMSGS.

The protein belongs to the SEC2 family. Homodimer. Interacts with the N-terminal region of SSX2. Interacts with the GDP-bound forms of RAB8A and RAB8B. The interaction with RAB8A is prevented by phosphorylation of RAB8A at 'Thr-72'. Interacts with the GDP-bound forms of RAB3A and RAB3D. Interacts with DCDC1. Interacts (via the N-terminal region) with TRAPPC14; this interaction mediates RAB3IP association with the TRAPP II complex. Forms a heterotetramer with RAB11A where RAB3IP homodimer binds two RAB11A subunits. Forms a complex with RAB11A and RAB11FIP3, probably a heterohexamer with two of each protein subunit, where Rabin8/RAB3IP and RAB11FIP3 simultaneously bind to RAB11A; the complex promotes preciliary trafficking. Forms a complex containing RAB11A, ASAP1, RAB3IP, RAP11FIP3 and ARF4; the complex promotes preciliary trafficking; the complex binds to RHO in photoreceptor cells and promotes RHO ciliary transport. In terms of tissue distribution, ubiquitously expressed. Expressed at highest level in testis.

It localises to the cytoplasm. The protein localises to the nucleus. The protein resides in the cytoskeleton. Its subcellular location is the cell projection. It is found in the lamellipodium. In terms of biological role, guanine nucleotide exchange factor (GEF) which may activate RAB8A and RAB8B. Promotes the exchange of GDP to GTP, converting inactive GDP-bound Rab proteins into their active GTP-bound form. Mediates the release of GDP from RAB8A and RAB8B but not from RAB3A or RAB5. Modulates actin organization and promotes polarized transport of RAB8A-specific vesicles to the cell surface. Together with RAB11A, RAB8A, the exocyst complex, PARD3, PRKCI, ANXA2, CDC42 and DNMBP promotes transcytosis of PODXL to the apical membrane initiation sites (AMIS), apical surface formation and lumenogenesis. Together with RAB11A and FIP3/RAB11FIP3, parts of the ciliary targeting complex that promotes preciliary vesicle trafficking to mother centriole and ciliogenesis initiation. Part of the ciliary targeting complex containing Rab11, ASAP1, RAB3IP and RAB11FIP3 and ARF4 that promotes RAB3IP preciliary vesicle trafficking to mother centriole and ciliogenesis initiation. In Rattus norvegicus (Rat), this protein is Rab-3A-interacting protein (Rab3ip).